The primary structure comprises 82 residues: MKLTCVVIVAALLLTACQLITALDCGGTQKHRALRSTIKLSLLRQHRGWCGDPGATCGKLRLYCCSGFCDCYTKTCKDKSSA.

The first 22 residues, 1 to 22 (MKLTCVVIVAALLLTACQLITA), serve as a signal peptide directing secretion. Residues 23-47 (LDCGGTQKHRALRSTIKLSLLRQHR) constitute a propeptide that is removed on maturation. The residue at position 49 (Trp49) is a 6'-bromotryptophan. Intrachain disulfides connect Cys50–Cys65, Cys57–Cys69, and Cys64–Cys76. Position 53 is a 4-hydroxyproline (Pro53). Residue Cys71 coordinates a protein.

Belongs to the conotoxin O1 superfamily. Post-translationally, cys-71 is a key residue that tethers to the channel by covalent attachment, leading to nearly irreversible inhibition (k(off) very low). In order to determine the solution structure without dimerization, this residue was mutated to Cys. As to expression, expressed by the venom duct.

It localises to the secreted. Mu-conotoxins block voltage-gated sodium channels (Nav). This toxin (GVIIJ(SSG)) blocks Nav1.1/SCN1A (Kd=11 nM), Nav1.2/SCN2A (Kd=11 nM), Nav1.3/SCN3A (Kd=15 nM), Nav1.4/SCN4A (Kd=4.7 nM), Nav1.6/SCN8A (Kd=360 nM) and Nav1.7/SCN9A (Kd=41 nM). It binds the channel at the newly described site 8, which is composed by two surfaces whose one contains a non-disulfide-bonded cysteine (which is free to covalently bind the toxin Cys-71). It is noteworthy that coexpression of subunits beta-2 or beta-4 (but not beta-1 or beta-3) protects rNav1.1-1.7 against block by the toxin, since these subunits (thanks to their extracellular domain) covalently bind to the key cysteine of the channel, thus preventing the covalent binding of the toxin. This Conus geographus (Geography cone) protein is Mu-conotoxin GVIIJ.